A 165-amino-acid polypeptide reads, in one-letter code: IQSTSMDQGSLSEDSMNSFIRTLIQAGIWKNKVPKQAARTKDGMQTTVKEAEAEPGAVANRGVRLGSQPVVSVDTELLRQQRRFSSPRVLLSENAPLEPPPLYLMEEPMVLNQTSRRKRFAEGKSHRGEYSVCDSESRWVTDKSSAVDIRGHQVTVLGEIRMGSS.

A signal peptide spans 1-3 (IQS). A propeptide spanning residues 4 to 119 (TSMDQGSLSE…VLNQTSRRKR (116 aa)) is cleaved from the precursor. Asn112 carries N-linked (GlcNAc...) asparagine glycosylation.

This sequence belongs to the NGF-beta family.

The protein resides in the secreted. Seems to promote the survival of visceral and proprioceptive sensory neurons. The chain is Neurotrophin-3 (NTF3) from Aspidites melanocephalus (Black-headed python).